Here is a 732-residue protein sequence, read N- to C-terminus: Catalase-peroxidase (732 aa).

The interval 1–24 is disordered; it reads MDAKTDDNSAGKCPVAHGSAGRTN. Residues 96-219 constitute a cross-link (tryptophyl-tyrosyl-methioninium (Trp-Tyr) (with M-245)); that stretch reads WHSAGTYRIA…LGAVQMGLIY (124 aa). The active-site Proton acceptor is H97. Residues 219-245 constitute a cross-link (tryptophyl-tyrosyl-methioninium (Tyr-Met) (with W-96)); it reads YVNPEGPNGNPDPLAAARDIRDTFARM. H260 is a heme b binding site.

The protein belongs to the peroxidase family. Peroxidase/catalase subfamily. In terms of assembly, homodimer or homotetramer. It depends on heme b as a cofactor. In terms of processing, formation of the three residue Trp-Tyr-Met cross-link is important for the catalase, but not the peroxidase activity of the enzyme.

The enzyme catalyses H2O2 + AH2 = A + 2 H2O. It carries out the reaction 2 H2O2 = O2 + 2 H2O. Bifunctional enzyme with both catalase and broad-spectrum peroxidase activity. This is Catalase-peroxidase from Mesorhizobium japonicum (strain LMG 29417 / CECT 9101 / MAFF 303099) (Mesorhizobium loti (strain MAFF 303099)).